Reading from the N-terminus, the 2715-residue chain is Cilia- and flagella-associated protein 46 (2715 aa).

TPR repeat units follow at residues Cys89–Glu122, Ala175–His208, Gly261–Glu295, Pro324–Asp359, Cys426–Gly459, Ser469–Asp503, Ser807–Ser845, Leu936–Tyr969, Ala1111–Thr1144, and Ala1174–Pro1211. The segment at Ser1356–Lys1412 is disordered. The segment covering Pro1361–Lys1403 has biased composition (basic and acidic residues). Positions Lys1362–Glu1401 form a coiled coil. Residues Ala1639–Glu1672 form a TPR 11 repeat. The stretch at Val1781–Glu1810 forms a coiled coil. Disordered regions lie at residues Glu2000–Arg2023, Ala2294–Val2319, and Glu2371–Ile2399. 2 stretches are compositionally biased toward basic and acidic residues: residues Gly2300 to Thr2311 and Glu2371 to Arg2383. Residues Asp2384–Ser2398 show a composition bias toward basic residues. TPR repeat units follow at residues Ile2399 to Thr2432 and Val2504 to Trp2537. A disordered region spans residues Ala2541–Ala2567. Residues Asp2546–Ser2559 are compositionally biased toward basic and acidic residues.

Belongs to the CFAP46 family.

The protein resides in the cytoplasm. The protein localises to the cytoskeleton. It localises to the cilium axoneme. Functionally, as part of the central apparatus of the cilium axoneme plays a role in cilium movement. This chain is Cilia- and flagella-associated protein 46, found in Homo sapiens (Human).